The sequence spans 128 residues: Iron-sulfur cluster insertion protein ErpA (128 aa).

Iron-sulfur cluster-binding residues include Cys56, Cys120, and Cys122.

It belongs to the HesB/IscA family. Homodimer. Iron-sulfur cluster is required as a cofactor.

Its function is as follows. Required for insertion of 4Fe-4S clusters for at least IspG. This is Iron-sulfur cluster insertion protein ErpA from Xylella fastidiosa (strain M12).